Here is a 298-residue protein sequence, read N- to C-terminus: 33 kDa chaperonin (298 aa).

2 cysteine pairs are disulfide-bonded: Cys239-Cys241 and Cys272-Cys275.

Belongs to the HSP33 family. In terms of processing, under oxidizing conditions two disulfide bonds are formed involving the reactive cysteines. Under reducing conditions zinc is bound to the reactive cysteines and the protein is inactive.

The protein localises to the cytoplasm. In terms of biological role, redox regulated molecular chaperone. Protects both thermally unfolding and oxidatively damaged proteins from irreversible aggregation. Plays an important role in the bacterial defense system toward oxidative stress. The protein is 33 kDa chaperonin of Picosynechococcus sp. (strain ATCC 27264 / PCC 7002 / PR-6) (Agmenellum quadruplicatum).